Consider the following 238-residue polypeptide: Large ribosomal subunit protein uL5c (238 aa).

This sequence belongs to the universal ribosomal protein uL5 family. Part of the 50S ribosomal subunit; contacts the 5S rRNA.

The protein localises to the plastid. It localises to the chloroplast. Functionally, binds 5S rRNA, forms part of the central protuberance of the 50S subunit. This is Large ribosomal subunit protein uL5c (rpl5) from Thalassiosira pseudonana (Marine diatom).